The primary structure comprises 232 residues: uncharacterized protein (232 aa).

Residues 1–18 form the signal peptide; sequence MGILKSLFTLGKSFISQA. Positions 207–232 are disordered; it reads AEAGIGGSNKSSAQDVLARLQRQQGE.

It belongs to the PspA/Vipp/IM30 family.

This is an uncharacterized protein from Escherichia coli O6:H1 (strain CFT073 / ATCC 700928 / UPEC).